The sequence spans 165 residues: Transcriptional repressor NrdR (165 aa).

Residues 3–34 (CPYCGQLNNRVVDSRLSRSEFAVRRRRECLDC) fold into a zinc finger. One can recognise an ATP-cone domain in the interval 49-139 (VMVVKKDGRR…VYREFKDVDD (91 aa)).

This sequence belongs to the NrdR family. Zn(2+) is required as a cofactor.

In terms of biological role, negatively regulates transcription of bacterial ribonucleotide reductase nrd genes and operons by binding to NrdR-boxes. The chain is Transcriptional repressor NrdR from Desulforapulum autotrophicum (strain ATCC 43914 / DSM 3382 / VKM B-1955 / HRM2) (Desulfobacterium autotrophicum).